We begin with the raw amino-acid sequence, 210 residues long: Large ribosomal subunit protein uL4 (210 aa).

Polar residues predominate over residues 44-54 (KRQGTASTLTR). Residues 44-85 (KRQGTASTLTRSEVRGGGRKPYKQKGTGRARQGSIRTPLRPG) are disordered. A compositionally biased stretch (basic residues) spans 60 to 71 (GGRKPYKQKGTG).

It belongs to the universal ribosomal protein uL4 family. Part of the 50S ribosomal subunit.

One of the primary rRNA binding proteins, this protein initially binds near the 5'-end of the 23S rRNA. It is important during the early stages of 50S assembly. It makes multiple contacts with different domains of the 23S rRNA in the assembled 50S subunit and ribosome. Its function is as follows. Forms part of the polypeptide exit tunnel. The protein is Large ribosomal subunit protein uL4 of Prochlorococcus marinus (strain MIT 9301).